We begin with the raw amino-acid sequence, 211 residues long: GATA transcription factor 19 (211 aa).

The segment at 77–102 (CANCDTTSTPLWRNGPRGPKSLCNAC) adopts a GATA-type zinc-finger fold. Positions 111 to 131 (RRASTARNSTSGGGSTAAGVP) are disordered.

The protein belongs to the type IV zinc-finger family. Class B subfamily. Forms heterodimers with GATA18.

It localises to the nucleus. In terms of biological role, transcriptional regulator that specifically binds 5'-GATA-3' or 5'-GAT-3' motifs within gene promoters. Regulates both flower and shoot apical meristem (SAM) development, especially for establishing organ boundaries in shoots and flowers, probably by controlling the number and position of WUS-expressing cells. The protein is GATA transcription factor 19 of Arabidopsis thaliana (Mouse-ear cress).